A 101-amino-acid polypeptide reads, in one-letter code: Small ribosomal subunit protein uS14 (101 aa).

Belongs to the universal ribosomal protein uS14 family. In terms of assembly, part of the 30S ribosomal subunit. Contacts proteins S3 and S10.

Binds 16S rRNA, required for the assembly of 30S particles and may also be responsible for determining the conformation of the 16S rRNA at the A site. This Bartonella henselae (strain ATCC 49882 / DSM 28221 / CCUG 30454 / Houston 1) (Rochalimaea henselae) protein is Small ribosomal subunit protein uS14.